Reading from the N-terminus, the 264-residue chain is Transmembrane protein 41A (264 aa).

Residues 1-17 (MHSLLGLLLVFAGSTFA) form the signal peptide. A run of 5 helical transmembrane segments spans residues 67-87 (VYVF…AIPG), 90-110 (FLNV…LCCV), 153-173 (LFFF…FLNL), 175-195 (APIL…GLIP), and 219-239 (WETA…GTLI). Residues 96–207 (GALFGPWLGL…FICVQTGSIL (112 aa)) are VTT domain.

This sequence belongs to the TMEM41 family.

It is found in the membrane. The protein is Transmembrane protein 41A (TMEM41A) of Bos taurus (Bovine).